A 141-amino-acid chain; its full sequence is ATP synthase epsilon chain (141 aa).

Belongs to the ATPase epsilon chain family. As to quaternary structure, F-type ATPases have 2 components, CF(1) - the catalytic core - and CF(0) - the membrane proton channel. CF(1) has five subunits: alpha(3), beta(3), gamma(1), delta(1), epsilon(1). CF(0) has three main subunits: a, b and c.

The protein localises to the cell inner membrane. Its function is as follows. Produces ATP from ADP in the presence of a proton gradient across the membrane. This is ATP synthase epsilon chain from Pseudomonas fluorescens (strain Pf0-1).